The primary structure comprises 205 residues: Guanylate kinase (205 aa).

The region spanning 6 to 185 is the Guanylate kinase-like domain; sequence GLLIVLSGPS…ACERIKAIVV (180 aa). Position 13-20 (13-20) interacts with ATP; it reads GPSGVGKG.

The protein belongs to the guanylate kinase family.

The protein resides in the cytoplasm. The enzyme catalyses GMP + ATP = GDP + ADP. In terms of biological role, essential for recycling GMP and indirectly, cGMP. This Bacillus anthracis protein is Guanylate kinase.